Here is a 302-residue protein sequence, read N- to C-terminus: Probable histone acetyltransferase Rv0428c (302 aa).

It catalyses the reaction L-lysyl-[histone] + acetyl-CoA = N(6)-acetyl-L-lysyl-[histone] + CoA + H(+). Functionally, shows histone acetyl transferase (HAT) activity with recombinant eukaryotic H3 histone expressed in bacteria as substrate and acetyl-CoA as donor. May be involved in survival under stress conditions. This Mycobacterium tuberculosis (strain ATCC 25618 / H37Rv) protein is Probable histone acetyltransferase Rv0428c.